The chain runs to 277 residues: Large ribosomal subunit protein uL2 (277 aa).

A disordered region spans residues 222–277 (GVAMNPVDHPHGGGEGRTSGGRHPVTPWGKPTKGKKTRSNKATDKFIMRSRHQRKK).

It belongs to the universal ribosomal protein uL2 family. As to quaternary structure, part of the 50S ribosomal subunit. Forms a bridge to the 30S subunit in the 70S ribosome.

Its function is as follows. One of the primary rRNA binding proteins. Required for association of the 30S and 50S subunits to form the 70S ribosome, for tRNA binding and peptide bond formation. It has been suggested to have peptidyltransferase activity; this is somewhat controversial. Makes several contacts with the 16S rRNA in the 70S ribosome. The chain is Large ribosomal subunit protein uL2 from Brucella canis (strain ATCC 23365 / NCTC 10854 / RM-666).